The sequence spans 383 residues: RNA-binding motif, single-stranded-interacting protein 2 (383 aa).

Position 1 is an N-acetylmethionine (methionine 1). Residues 28–56 (QMAPPSPRNSTPNSSGGGGGGSGGNDQLS) are disordered. Over residues 42–51 (SGGGGGGSGG) the composition is skewed to gly residues. 2 RRM domains span residues 58–131 (TNLY…MAKQ) and 137–222 (TNLY…FADG). Phosphoserine is present on serine 108. Residue serine 287 is modified to Phosphoserine. The interval 352-383 (SSVSAEESNGQQNQLAVEPPSDHGVYPFQFSK) is disordered.

The protein resides in the nucleus. In Mus musculus (Mouse), this protein is RNA-binding motif, single-stranded-interacting protein 2 (Rbms2).